We begin with the raw amino-acid sequence, 137 residues long: Sporulation-specific cell division protein SsgB (137 aa).

It belongs to the SsgA family. Interacts with SsgA. Interacts with FtsZ (via N-terminus).

The protein localises to the cell septum. In terms of biological role, involved in sporulation-specific cell division. Required for early stages of sporulation. Important in the process of growth cessation prior to sporulation-specific cell division. Recruits cell division protein FtsZ to the future septum sites and tethers the contractile ring structure (Z ring) to the cytoplasmic membrane during sporulation. Stimulates polymerization and filament length of FtsZ in vitro. The protein is Sporulation-specific cell division protein SsgB of Streptomyces coelicolor (strain ATCC BAA-471 / A3(2) / M145).